Here is a 2944-residue protein sequence, read N- to C-terminus: Collagen alpha-1(VII) chain (2944 aa).

The N-terminal stretch at 1-16 (MTLRLLVAALCAGILA) is a signal peptide. Residues 17–1253 (EAPRVRAQHR…PEPCPVYCPK (1237 aa)) form a nonhelical region (NC1) region. The 174-residue stretch at 38–211 (DIVFLLDGSS…SILRTLLPLV (174 aa)) folds into the VWFA 1 domain. 9 consecutive Fibronectin type-III domains span residues 234 to 329 (APRD…TALE), 330 to 416 (GPEL…TDAS), 417 to 507 (VEQT…PELP), 510 to 597 (PVTD…EPET), 600 to 687 (AVPG…DPLG), 688 to 775 (PVRT…APEP), 778 to 866 (RVSR…PPEA), 869 to 957 (ALGT…SPRV), and 958 to 1051 (PSIE…CPRG). N-linked (GlcNAc...) asparagine glycosylation occurs at asparagine 337. The interval 632 to 651 (STGSGPESSQTLPPDSTATD) is disordered. Asparagine 786 is a glycosylation site (N-linked (GlcNAc...) asparagine). One can recognise a VWFA 2 domain in the interval 1054 to 1229 (DVVFLPHATQ…PSLDQAVSGL (176 aa)). Asparagine 1109 is a glycosylation site (N-linked (GlcNAc...) asparagine). 2 short sequence motifs (cell attachment site) span residues 1170-1172 (RGD) and 1334-1336 (RGD). Disordered regions lie at residues 1239–1941 (TTQP…SVPN), 1963–2782 (WDES…EKGE), and 2837–2872 (SHAEEEERVPPEDDEYSEYSEYSVEEYQDPEAPWDS). The segment at 1254–1477 (GQKGEPGEMG…GPRGPPGAIG (224 aa)) is interrupted collagenous region. The tract at residues 1254-2784 (GQKGEPGEMG…GPRGEKGEAA (1531 aa)) is triple-helical region. The span at 1336–1346 (DPGERGPRGPK) shows a compositional bias: basic and acidic residues. Positions 1355–1365 (VIGGEGPGLPG) are enriched in gly residues. Residues 1399–1408 (KGDKGDRGER) are compositionally biased toward basic and acidic residues. Residues 1429-1440 (PGSPGPQGPVGP) are compositionally biased toward pro residues. Residues 1574-1583 (RGPPGLVLPG) show a composition bias toward low complexity. 3 stretches are compositionally biased toward basic and acidic residues: residues 1630 to 1642 (RGRDGEVGEKGDE), 1669 to 1683 (VGEKGDQGDPGEDGR), and 1715 to 1733 (AREKGEPGDRGQEGPRGPK). Positions 1786–1802 (KPGAAGPSGPNGAAGKA) are enriched in low complexity. Residues 1852–1877 (EDGRKGEKGDSGASGREGRDGPKGER) are compositionally biased toward basic and acidic residues. The span at 1886-1897 (QGPPGLPGPVGP) shows a compositional bias: pro residues. Positions 1898 to 1911 (PGQGFPGVPGGTGP) are enriched in gly residues. The span at 1974–1984 (PERRRGPKGDS) shows a compositional bias: basic and acidic residues. The Cell attachment site signature appears at 2008–2010 (RGD). 4-hydroxyproline occurs at positions 2036 and 2039. The span at 2046–2055 (GRAGGVGEAG) shows a compositional bias: gly residues. Residues 2056–2074 (RPGERGERGEKGERGEQGR) show a composition bias toward basic and acidic residues. Residues 2078-2092 (PGLPGTPGPPGPPGP) show a composition bias toward pro residues. Proline 2084, proline 2087, and proline 2090 each carry 4-hydroxyproline. Residues 2127–2143 (PKGDRGVPGIKGDRGEP) are compositionally biased toward basic and acidic residues. 4-hydroxyproline occurs at positions 2167, 2176, 2185, and 2188. Composition is skewed to low complexity over residues 2191–2206 (PGLAGPAGPQGPSGLK) and 2235–2250 (SGLVGPQGSPGLPGQV). Over residues 2328–2346 (AKGDRGLPGPRGEKGEAGR) the composition is skewed to basic and acidic residues. A compositionally biased stretch (low complexity) spans 2387–2406 (VKGDLGLPGLPGAPGVVGFP). Pro residues predominate over residues 2438-2448 (PLGPPGPPGSV). 2 stretches are compositionally biased toward basic and acidic residues: residues 2471–2486 (RGERGEPGIRGEDGRP) and 2534–2570 (AKGDMGERGPRGLDGDKGPRGDNGDPGDKGSKGEPGD). Residues 2553-2555 (RGD) carry the Cell attachment site motif. The span at 2573–2601 (SAGLPGLRGLLGPQGQPGAAGIPGDPGSP) shows a compositional bias: low complexity. Lysine 2625 and lysine 2631 each carry 5-hydroxylysine; alternate. O-linked (Gal...) hydroxylysine; alternate glycans are attached at residues lysine 2625 and lysine 2631. Proline 2664, proline 2667, and proline 2673 each carry 4-hydroxyproline. The segment covering 2704 to 2713 (GTPGIGGFPG) has biased composition (gly residues). Low complexity predominate over residues 2749 to 2762 (GERVVGAPGVPGAP). The tract at residues 2785–2944 (LTEDDIRGFV…QSQGTGTAQD (160 aa)) is nonhelical region (NC2). The span at 2837-2847 (SHAEEEERVPP) shows a compositional bias: basic and acidic residues. Acidic residues predominate over residues 2848 to 2872 (EDDEYSEYSEYSVEEYQDPEAPWDS). One can recognise a BPTI/Kunitz inhibitor domain in the interval 2872–2944 (SDDPCSLPLD…QSQGTGTAQD (73 aa)). Intrachain disulfides connect cysteine 2876/cysteine 2929, cysteine 2885/cysteine 2912, and cysteine 2904/cysteine 2925.

As to quaternary structure, homotrimer. Interacts with MIA3/TANGO1; facilitating its loading into transport carriers and subsequent secretion. Post-translationally, prolines at the third position of the tripeptide repeating unit (G-X-Y) are hydroxylated in some or all of the chains.

The protein localises to the secreted. The protein resides in the extracellular space. It localises to the extracellular matrix. It is found in the basement membrane. Stratified squamous epithelial basement membrane protein that forms anchoring fibrils which may contribute to epithelial basement membrane organization and adherence by interacting with extracellular matrix (ECM) proteins such as type IV collagen. The chain is Collagen alpha-1(VII) chain (COL7A1) from Homo sapiens (Human).